The sequence spans 452 residues: L-seryl-tRNA(Sec) selenium transferase (452 aa).

Lysine 285 is subject to N6-(pyridoxal phosphate)lysine.

The protein belongs to the SelA family. Pyridoxal 5'-phosphate serves as cofactor.

It is found in the cytoplasm. The enzyme catalyses L-seryl-tRNA(Sec) + selenophosphate + H(+) = L-selenocysteinyl-tRNA(Sec) + phosphate. Its pathway is aminoacyl-tRNA biosynthesis; selenocysteinyl-tRNA(Sec) biosynthesis; selenocysteinyl-tRNA(Sec) from L-seryl-tRNA(Sec) (bacterial route): step 1/1. Converts seryl-tRNA(Sec) to selenocysteinyl-tRNA(Sec) required for selenoprotein biosynthesis. This chain is L-seryl-tRNA(Sec) selenium transferase, found in Aquifex aeolicus (strain VF5).